The primary structure comprises 130 residues: DUF35 domain-containing scaffold protein (130 aa).

Zn(2+) is bound by residues Cys-20, Cys-23, Cys-34, and Cys-37.

It belongs to the scaffold protein DUF35 family. Interacts with acetoacetyl-CoA thiolase and HMG-CoA synthase (HMGCS) that catalyzes the first and second step in the mevalonate pathway, respectively.

Functions as a scaffold to connect the acetoacetyl-CoA thiolase and HMG-CoA synthase (HMGCS) dimers in the channeling thiolase/HMGCS complex, which allows for efficient coupling of the endergonic thiolase reaction with the exergonic HMGCS reaction. This chain is DUF35 domain-containing scaffold protein, found in Methanothermococcus thermolithotrophicus (Methanococcus thermolithotrophicus).